A 404-amino-acid polypeptide reads, in one-letter code: Pectate lyase E (404 aa).

The signal sequence occupies residues 1-41 (MNNSRMSSVSTQKTTGRSALGTKSALAAIIATTMMVSVASA). Ca(2+)-binding residues include aspartate 182 and aspartate 225. The active site involves arginine 278.

Belongs to the polysaccharide lyase 1 family. PLBC subfamily. It depends on Ca(2+) as a cofactor.

It localises to the secreted. The catalysed reaction is Eliminative cleavage of (1-&gt;4)-alpha-D-galacturonan to give oligosaccharides with 4-deoxy-alpha-D-galact-4-enuronosyl groups at their non-reducing ends.. It functions in the pathway glycan metabolism; pectin degradation; 2-dehydro-3-deoxy-D-gluconate from pectin: step 2/5. Involved in maceration and soft-rotting of plant tissue. Pectate lyases have been implicated as pathogenicity factors which induce maceration or rotting of plant tissue. PelE is sufficient to induce these effects under laboratory conditions. The polypeptide is Pectate lyase E (pelE) (Dickeya dadantii (strain 3937) (Erwinia chrysanthemi (strain 3937))).